The following is a 325-amino-acid chain: uncharacterized protein (325 aa).

The disordered stretch occupies residues 37-85; sequence EKPTYTPAKPVKKAPSVVQPRRVSRTLRSSESVHTNHGPERVFESPTPA. S52 carries the phosphoserine modification. Residues 62 to 71 show a composition bias toward polar residues; the sequence is TLRSSESVHT. The 159-residue stretch at 153–311 folds into the FCP1 homology domain; the sequence is EDEGKKCLIL…IDLIPFLEHL (159 aa).

This is an uncharacterized protein from Schizosaccharomyces pombe (strain 972 / ATCC 24843) (Fission yeast).